We begin with the raw amino-acid sequence, 33 residues long: Neutrophil defensin 3 (33 aa).

3 disulfides stabilise this stretch: Cys3-Cys31, Cys5-Cys20, and Cys10-Cys30.

It belongs to the alpha-defensin family.

The protein localises to the secreted. Anti-fungal and bactericidal activity, greater against Gram-positive bacteria. This is Neutrophil defensin 3 from Mesocricetus auratus (Golden hamster).